The sequence spans 221 residues: Small ribosomal subunit protein eS8 (221 aa).

Disordered regions lie at residues 1–41 and 128–169; these read MGIS…LSSN and TPAA…TLDP. Residues 8–26 show a composition bias toward basic residues; that stretch reads MHKRRATGGKQKAWRKKRK. Residues 146 to 169 are compositionally biased toward basic and acidic residues; the sequence is EETKKSNHVTRKLEKRKEGRTLDP.

It belongs to the eukaryotic ribosomal protein eS8 family.

This chain is Small ribosomal subunit protein eS8 (RPS8), found in Zea mays (Maize).